We begin with the raw amino-acid sequence, 85 residues long: Large ribosomal subunit protein bL27 (85 aa).

The protein belongs to the bacterial ribosomal protein bL27 family.

In Pseudomonas fluorescens (strain SBW25), this protein is Large ribosomal subunit protein bL27.